Reading from the N-terminus, the 251-residue chain is MRRKIVAGNWKLHGSRQFANELLGQVAAGLPLEGVDVVILPPLPYLGELVEDFGDTGLAFGAQDVSSNEKGAYTGEVCAAMLVEVGARYGLVGHSERRQYHHESSELVARKFAAAQHAGLVPVLCVGETLEQREAGQTNVVIASQLAPVLELVGAAGFAKAVVAYEPVWAIGTGRTATKEQAQQVHAFIRGEVARIDARIADSLPIVYGGSVKPDNAGELFAQPDVDGGLVGGASLVAADFLAIARAAAAN.

9–11 (NWK) is a substrate binding site. Histidine 94 acts as the Electrophile in catalysis. Glutamate 166 serves as the catalytic Proton acceptor. Substrate is bound by residues glycine 172, serine 211, and 232 to 233 (GG).

Belongs to the triosephosphate isomerase family. Homodimer.

Its subcellular location is the cytoplasm. The catalysed reaction is D-glyceraldehyde 3-phosphate = dihydroxyacetone phosphate. Its pathway is carbohydrate biosynthesis; gluconeogenesis. It functions in the pathway carbohydrate degradation; glycolysis; D-glyceraldehyde 3-phosphate from glycerone phosphate: step 1/1. Involved in the gluconeogenesis. Catalyzes stereospecifically the conversion of dihydroxyacetone phosphate (DHAP) to D-glyceraldehyde-3-phosphate (G3P). In Stenotrophomonas maltophilia (strain R551-3), this protein is Triosephosphate isomerase.